The chain runs to 93 residues: Small ribosomal subunit protein uS19 (93 aa).

The protein belongs to the universal ribosomal protein uS19 family.

Its function is as follows. Protein S19 forms a complex with S13 that binds strongly to the 16S ribosomal RNA. The chain is Small ribosomal subunit protein uS19 from Citrifermentans bemidjiense (strain ATCC BAA-1014 / DSM 16622 / JCM 12645 / Bem) (Geobacter bemidjiensis).